Consider the following 324-residue polypeptide: 4-hydroxy-2-oxoglutarate aldolase, mitochondrial (324 aa).

The transit peptide at Met1 to Gln22 directs the protein to the mitochondrion. Residue Ser74–Asn75 participates in substrate binding. Catalysis depends on Lys193, which acts as the Schiff-base intermediate with substrate. The substrate site is built by Ser195 and Gly219.

The protein belongs to the DapA family. Homotetramer.

It localises to the mitochondrion. It catalyses the reaction (4S)-4-hydroxy-2-oxoglutarate = glyoxylate + pyruvate. It carries out the reaction (4R)-4-hydroxy-2-oxoglutarate = glyoxylate + pyruvate. With respect to regulation, inhibited by divalent cations. In terms of biological role, catalyzes the final step in the metabolic pathway of hydroxyproline. This is 4-hydroxy-2-oxoglutarate aldolase, mitochondrial from Danio rerio (Zebrafish).